Consider the following 1402-residue polypeptide: Defective in tip formation protein A (1402 aa).

Disordered stretches follow at residues 1-20 (MKDI…PPQI), 37-94 (NVTT…PQIV), 109-133 (NTPS…DNDI), and 210-292 (KQSS…RRLK). Repeat copies occupy residues 12-18 (TTTVAPP) and 40-46 (TTTVQPP). Positions 12–92 (TTTVAPPQIN…TTTTTVQPPQ (81 aa)) are 4 X 7 AA repeat of T-T-T-[IV]-[AQ]-P-P. Over residues 38–47 (VTTTTVQPPQ) the composition is skewed to low complexity. Residues 48–58 (IVSPPSPPSPP) are compositionally biased toward pro residues. Positions 59–94 (QTTTIAPPTILPTTKTTTTTTTTTTTTTTVQPPQIV) are enriched in low complexity. Repeat copies occupy residues 60 to 66 (TTTIAPP) and 86 to 92 (TTVQPPQ). The span at 210 to 234 (KQSSQSQLQQQLSSQSLQQIQQKSK) shows a compositional bias: low complexity. Over residues 235 to 253 (QPPPQQQQQQQPPPPPIPL) the composition is skewed to pro residues. A compositionally biased stretch (low complexity) spans 254–279 (LPQIHQQLKPKQQQEQQQQQEQQQQQ). A coiled-coil region spans residues 350–383 (QRIKSFIENHKKKKQKYREYQSEKNQQQKSNSKK). Disordered stretches follow at residues 429–453 (DQQQ…SPMT) and 712–745 (NNNN…NLSN). The span at 430-453 (QQQQQQQQQQSTMTTTSSSSSPMT) shows a compositional bias: low complexity.

The protein resides in the cell surface. Its function is as follows. Required for correct organization of the actin cytoskeleton and cytokinesis. Also required for apical sorting of prestalk cells, a prerequisite for formation of the tip at the mound stage and subsequent formation of the fruiting body. May be required for cell adhesion. This is Defective in tip formation protein A (dtfA) from Dictyostelium discoideum (Social amoeba).